The primary structure comprises 184 residues: NADH-quinone oxidoreductase subunit B (184 aa).

[4Fe-4S] cluster contacts are provided by C37, C38, C103, and C132.

This sequence belongs to the complex I 20 kDa subunit family. In terms of assembly, NDH-1 is composed of 14 different subunits. Subunits NuoB, C, D, E, F, and G constitute the peripheral sector of the complex. [4Fe-4S] cluster serves as cofactor.

The protein resides in the cell membrane. The catalysed reaction is a quinone + NADH + 5 H(+)(in) = a quinol + NAD(+) + 4 H(+)(out). Its function is as follows. NDH-1 shuttles electrons from NADH, via FMN and iron-sulfur (Fe-S) centers, to quinones in the respiratory chain. The immediate electron acceptor for the enzyme in this species is believed to be a menaquinone. Couples the redox reaction to proton translocation (for every two electrons transferred, four hydrogen ions are translocated across the cytoplasmic membrane), and thus conserves the redox energy in a proton gradient. This Nocardia farcinica (strain IFM 10152) protein is NADH-quinone oxidoreductase subunit B.